The sequence spans 185 residues: Shikimate kinase (185 aa).

15–20 (GAGKST) contacts ATP. S19 is a Mg(2+) binding site. Substrate-binding residues include D37, R61, and G83. R121 is an ATP binding site. R146 is a binding site for substrate.

This sequence belongs to the shikimate kinase family. In terms of assembly, monomer. Requires Mg(2+) as cofactor.

It is found in the cytoplasm. It carries out the reaction shikimate + ATP = 3-phosphoshikimate + ADP + H(+). The protein operates within metabolic intermediate biosynthesis; chorismate biosynthesis; chorismate from D-erythrose 4-phosphate and phosphoenolpyruvate: step 5/7. Its function is as follows. Catalyzes the specific phosphorylation of the 3-hydroxyl group of shikimic acid using ATP as a cosubstrate. This chain is Shikimate kinase, found in Blochmanniella floridana.